Reading from the N-terminus, the 124-residue chain is Large ribosomal subunit protein uL14 (124 aa).

It belongs to the universal ribosomal protein uL14 family. Part of the 50S ribosomal subunit. Forms a cluster with proteins L3 and L19. In the 70S ribosome, L14 and L19 interact and together make contacts with the 16S rRNA in bridges B5 and B8.

Functionally, binds to 23S rRNA. Forms part of two intersubunit bridges in the 70S ribosome. The sequence is that of Large ribosomal subunit protein uL14 from Mycoplasmoides gallisepticum (strain R(low / passage 15 / clone 2)) (Mycoplasma gallisepticum).